Reading from the N-terminus, the 3390-residue chain is Genome polyprotein (3390 aa).

The segment at 1–15 (MNNQRKKTGKPSINM) is interaction with host EXOC1. Residues 1–100 (MNNQRKKTGK…MLSIINKRKK (100 aa)) are Cytoplasmic-facing. The interval 37-72 (LLNGQGPMKLVMAFIAFLRFLAIPPTAGVLARWGTF) is hydrophobic; homodimerization of capsid protein C. The propeptide at 101-114 (TSLCLMMIMPAALA) is ER anchor for the capsid protein C, removed in mature form by serine protease NS3. A helical transmembrane segment spans residues 101 to 120 (TSLCLMMIMPAALAFHLTSR). At 121–243 (DGEPRMIVGK…VEKVETWALR (123 aa)) the chain is on the extracellular side. N-linked (GlcNAc...) asparagine; by host glycosylation is present at N183. A helical transmembrane segment spans residues 244–264 (HPGFTILALFLAHYIGTSLTQ). Residue K265 is a topological domain, cytoplasmic. The chain crosses the membrane as a helical span at residues 266 to 280 (VVIFILLMLVTPSMT). The Extracellular portion of the chain corresponds to 281-723 (MRCVGVGNRD…VHQIFGSAYT (443 aa)). Disulfide bonds link C283-C310, C340-C401, C354-C385, and C372-C396. The N-linked (GlcNAc...) asparagine; by host glycan is linked to N347. A fusion peptide region spans residues 378-391 (DRGWGNGCGLFGKG). N-linked (GlcNAc...) asparagine; by host glycosylation occurs at N433. Intrachain disulfides connect C463/C563 and C580/C611. A helical membrane pass occupies residues 724 to 744 (ALFSGVSWVMKIGIGVLLTWI). Residues 745–750 (GLNSKN) lie on the Cytoplasmic side of the membrane. Residues 751-771 (TSMSFSCIAIGIITLYLGAVV) traverse the membrane as a helical segment. Topologically, residues 772-1193 (QADMGCVINW…MIGSNASDRM (422 aa)) are extracellular. Intrachain disulfides connect C777–C788, C828–C916, C952–C996, C1053–C1102, C1064–C1086, and C1085–C1089. N-linked (GlcNAc...) asparagine; by host glycosylation is found at N903 and N980. 2 N-linked (GlcNAc...) asparagine; by host glycosylation sites follow: N1132 and N1188. A helical membrane pass occupies residues 1194 to 1218 (GMGVTYLALIATFKIQPFLALGFFL). Over 1219–1224 (RKLTSR) the chain is Cytoplasmic. A helical transmembrane segment spans residues 1225 to 1243 (ENLLLGVGLAMATTLQLPE). At 1244-1267 (DIEQMANGIALGLMALKLITQFET) the chain is on the lumenal side. Residues 1268 to 1288 (YQLWTALISLTCSNTMFTLTV) form a helical membrane-spanning segment. Residue A1289 is a topological domain, cytoplasmic. Residues 1290–1308 (WRTATLILAGVSLLPVCQS) traverse the membrane as a helical segment. The Lumenal portion of the chain corresponds to 1309–1315 (SSMRKTD). The helical transmembrane segment at 1316–1336 (WLPMAVAAMGVPPLPLFIFSL) threads the bilayer. Residues 1337–1344 (KDTLKRRS) are Cytoplasmic-facing. A helical membrane pass occupies residues 1345 to 1365 (WPLNEGVMAVGLVSILASSLL). Topologically, residues 1366–1368 (RND) are lumenal. Residues 1369–1389 (VPMAGPLVAGGLLIACYVITG) traverse the membrane as a helical segment. The Cytoplasmic portion of the chain corresponds to 1390 to 1443 (TSADLTVEKAADITWEEEAEQTGVSHNLMITVDDDGTMRIKDDETENILTVLLK). The segment at 1396-1435 (VEKAADITWEEEAEQTGVSHNLMITVDDDGTMRIKDDETE) is interacts with and activates NS3 protease. The helical intramembrane region spans 1444–1464 (TALLIVSGVFPYSIPATLLVW). Residues 1465–2146 (HTWQKQTQRS…VEELPETMET (682 aa)) are Cytoplasmic-facing. In terms of domain architecture, Peptidase S7 spans 1474–1651 (SGVLWDVPSP…NAEPDGPTPE (178 aa)). Active-site charge relay system; for serine protease NS3 activity residues include H1524, D1548, and S1608. The Helicase ATP-binding domain maps to 1654–1810 (EEMFKKRNLT…QSNAPIQDEE (157 aa)). The tract at residues 1658–1661 (KKRN) is important for RNA-binding. 1667–1674 (LHPGSGKT) provides a ligand contact to ATP. A DEAH box motif is present at residues 1758 to 1761 (DEAH). A Helicase C-terminal domain is found at 1820-1986 (SGNEWITDFA…GIIPALFEPE (167 aa)). At K1862 the chain carries N6-acetyllysine; by host. Residues 2147-2167 (LLLLGLMILLTGGAMLFLISG) traverse the membrane as a helical segment. The Lumenal segment spans residues 2168-2169 (KG). Residues 2170-2190 (IGKTSIGLICVIASSGMLWMA) constitute an intramembrane region (helical). A topological domain (lumenal) is located at residue E2191. A helical membrane pass occupies residues 2192 to 2212 (IPLQWIASAIVLEFFMMVLLI). Over 2213–2227 (PEPEKQRTPQDNQLA) the chain is Cytoplasmic. The helical transmembrane segment at 2228–2248 (YVVIGILTLAAIIAANEMGLL) threads the bilayer. Residues 2249-2273 (ETTKRDLGMSKEPGVVSPTSYLDVD) lie on the Lumenal side of the membrane. Positions 2274–2294 (LHPASAWTLYAVATTVITPML) form an intramembrane region, helical. Topologically, residues 2295-2305 (RHTIENSTANV) are lumenal. N2300 and N2304 each carry an N-linked (GlcNAc...) asparagine; by host glycan. Residues 2306–2326 (SLAAIANQAVVLMGLDKGWPI) constitute an intramembrane region (helical). The Lumenal segment spans residues 2327-2346 (SKMDLGVPLLALGCYSQVNP). Residues 2347–2367 (LTLTAAVLLLITHYAIIGPGL) traverse the membrane as a helical segment. Residues 2368–2412 (QAKATREAQKRTAAGIMKNPTVDGIMTIDLDPVIYDSKFEKQLGQ) are Cytoplasmic-facing. Residues 2413–2433 (VMLLVLCAVQLLLMRTSWALC) traverse the membrane as a helical segment. The Lumenal segment spans residues 2434-2458 (EALTLATGPITTLWEGSPGKFWNTT). N2456 carries N-linked (GlcNAc...) asparagine; by host glycosylation. The chain crosses the membrane as a helical span at residues 2459–2479 (IAVSMANIFRGSYLAGAGLAF). Residues 2480 to 3390 (SIMKSVGTGK…KEEESEGAIW (911 aa)) are Cytoplasmic-facing. An mRNA cap 0-1 NS5-type MT domain is found at 2492–2753 (TGSQGETLGE…DVDLGAGTRH (262 aa)). Residue S2546 participates in S-adenosyl-L-methionine binding. Position 2546 is a phosphoserine (S2546). K2551 acts as the For 2'-O-MTase activity in catalysis. Positions 2567–2570 (VIDL) match the SUMO-interacting motif motif. G2576, W2577, T2594, K2595, D2621, and V2622 together coordinate S-adenosyl-L-methionine. D2636 (for 2'-O-MTase activity) is an active-site residue. I2637 contributes to the S-adenosyl-L-methionine binding site. Active-site for 2'-O-MTase activity residues include K2670 and E2706. Residue Y2708 coordinates S-adenosyl-L-methionine. 4 residues coordinate Zn(2+): E2927, H2931, C2936, and C2939. The RdRp catalytic domain maps to 3018-3168 (AMYADDTAGW…PIDDRFANAL (151 aa)). H3202, C3218, and C3337 together coordinate Zn(2+).

In the N-terminal section; belongs to the class I-like SAM-binding methyltransferase superfamily. mRNA cap 0-1 NS5-type methyltransferase family. As to quaternary structure, homodimer. Interacts (via N-terminus) with host EXOC1 (via C-terminus); this interaction results in EXOC1 degradation through the proteasome degradation pathway. In terms of assembly, forms heterodimers with envelope protein E in the endoplasmic reticulum and Golgi. Homodimer; in the endoplasmic reticulum and Golgi. Interacts with protein prM. Interacts with non-structural protein 1. As to quaternary structure, homodimer; Homohexamer when secreted. Interacts with envelope protein E. In terms of assembly, interacts (via N-terminus) with serine protease NS3. Forms a heterodimer with serine protease NS3. May form homooligomers. As to quaternary structure, forms a heterodimer with NS2B. Interacts with NS4B. Interacts with unphosphorylated RNA-directed RNA polymerase NS5; this interaction stimulates RNA-directed RNA polymerase NS5 guanylyltransferase activity. In terms of assembly, interacts with host MAVS; this interaction inhibits the synthesis of IFN-beta. Interacts with host AUP1; the interaction occurs in the presence of Dengue virus NS4B and induces lipophagy which facilitates production of virus progeny particles. Interacts with serine protease NS3. As to quaternary structure, homodimer. Interacts with host STAT2; this interaction inhibits the phosphorylation of the latter, and, when all viral proteins are present (polyprotein), targets STAT2 for degradation. Interacts with serine protease NS3. In terms of processing, specific enzymatic cleavages in vivo yield mature proteins. Cleavages in the lumen of endoplasmic reticulum are performed by host signal peptidase, whereas cleavages in the cytoplasmic side are performed by serine protease NS3. Signal cleavage at the 2K-4B site requires a prior NS3 protease-mediated cleavage at the 4A-2K site. Post-translationally, cleaved in post-Golgi vesicles by a host furin, releasing the mature small envelope protein M, and peptide pr. This cleavage is incomplete as up to 30% of viral particles still carry uncleaved prM. N-glycosylated. In terms of processing, N-glycosylated. The excreted form is glycosylated and this is required for efficient secretion of the protein from infected cells. Post-translationally, acetylated by host KAT5. Acetylation modulates NS3 RNA-binding and unwinding activities and plays an important positive role for viral replication. Sumoylation of RNA-directed RNA polymerase NS5 increases NS5 protein stability allowing proper viral RNA replication. In terms of processing, phosphorylated on serines residues. This phosphorylation may trigger NS5 nuclear localization.

Its subcellular location is the virion. The protein localises to the host nucleus. The protein resides in the host cytoplasm. It localises to the host perinuclear region. It is found in the secreted. Its subcellular location is the virion membrane. The protein localises to the host endoplasmic reticulum membrane. The protein resides in the host mitochondrion. The catalysed reaction is Selective hydrolysis of -Xaa-Xaa-|-Yaa- bonds in which each of the Xaa can be either Arg or Lys and Yaa can be either Ser or Ala.. The enzyme catalyses RNA(n) + a ribonucleoside 5'-triphosphate = RNA(n+1) + diphosphate. It catalyses the reaction a ribonucleoside 5'-triphosphate + H2O = a ribonucleoside 5'-diphosphate + phosphate + H(+). It carries out the reaction ATP + H2O = ADP + phosphate + H(+). The catalysed reaction is a 5'-end (5'-triphosphoguanosine)-ribonucleoside in mRNA + S-adenosyl-L-methionine = a 5'-end (N(7)-methyl 5'-triphosphoguanosine)-ribonucleoside in mRNA + S-adenosyl-L-homocysteine. The enzyme catalyses a 5'-end (N(7)-methyl 5'-triphosphoguanosine)-ribonucleoside in mRNA + S-adenosyl-L-methionine = a 5'-end (N(7)-methyl 5'-triphosphoguanosine)-(2'-O-methyl-ribonucleoside) in mRNA + S-adenosyl-L-homocysteine + H(+). Its function is as follows. Plays a role in virus budding by binding to the cell membrane and gathering the viral RNA into a nucleocapsid that forms the core of a mature virus particle. During virus entry, may induce genome penetration into the host cytoplasm after hemifusion induced by the surface proteins. Can migrate to the cell nucleus where it modulates host functions. Overcomes the anti-viral effects of host EXOC1 by sequestering and degrading the latter through the proteasome degradation pathway. Inhibits RNA silencing by interfering with host Dicer. Functionally, prevents premature fusion activity of envelope proteins in trans-Golgi by binding to envelope protein E at pH6.0. After virion release in extracellular space, gets dissociated from E dimers. In terms of biological role, acts as a chaperone for envelope protein E during intracellular virion assembly by masking and inactivating envelope protein E fusion peptide. prM is the only viral peptide matured by host furin in the trans-Golgi network probably to avoid catastrophic activation of the viral fusion activity in acidic Golgi compartment prior to virion release. prM-E cleavage is inefficient, and many virions are only partially matured. These uncleaved prM would play a role in immune evasion. Its function is as follows. May play a role in virus budding. Exerts cytotoxic effects by activating a mitochondrial apoptotic pathway through M ectodomain. May display a viroporin activity. Binds to host cell surface receptor and mediates fusion between viral and cellular membranes. Envelope protein is synthesized in the endoplasmic reticulum in the form of heterodimer with protein prM. They play a role in virion budding in the ER, and the newly formed immature particle is covered with 60 spikes composed of heterodimer between precursor prM and envelope protein E. The virion is transported to the Golgi apparatus where the low pH causes dissociation of PrM-E heterodimers and formation of E homodimers. prM-E cleavage is inefficient, and many virions are only partially matured. These uncleaved prM would play a role in immune evasion. Functionally, involved in immune evasion, pathogenesis and viral replication. Once cleaved off the polyprotein, is targeted to three destinations: the viral replication cycle, the plasma membrane and the extracellular compartment. Essential for viral replication. Required for formation of the replication complex and recruitment of other non-structural proteins to the ER-derived membrane structures. Excreted as a hexameric lipoparticle that plays a role against host immune response. Antagonizing the complement function. Binds to the host macrophages and dendritic cells. Inhibits signal transduction originating from Toll-like receptor 3 (TLR3). In terms of biological role, disrupts the host endothelial glycocalyx layer of host pulmonary microvascular endothelial cells, inducing degradation of sialic acid and shedding of heparan sulfate proteoglycans. NS1 induces expression of sialidases, heparanase, and activates cathepsin L, which activates heparanase via enzymatic cleavage. These effects are probably linked to the endothelial hyperpermeability observed in severe dengue disease. Its function is as follows. Component of the viral RNA replication complex that functions in virion assembly and antagonizes the host immune response. Required cofactor for the serine protease function of NS3. May have membrane-destabilizing activity and form viroporins. Functionally, displays three enzymatic activities: serine protease, NTPase and RNA helicase. NS3 serine protease, in association with NS2B, performs its autocleavage and cleaves the polyprotein at dibasic sites in the cytoplasm: C-prM, NS2A-NS2B, NS2B-NS3, NS3-NS4A, NS4A-2K and NS4B-NS5. NS3 RNA helicase binds RNA and unwinds dsRNA in the 3' to 5' direction. In terms of biological role, regulates the ATPase activity of the NS3 helicase activity. NS4A allows NS3 helicase to conserve energy during unwinding. Plays a role in the inhibition of the host innate immune response. Interacts with host MAVS and thereby prevents the interaction between RIGI and MAVS. In turn, IFN-beta production is impaired. Interacts with host AUP1 which mediates induction of lipophagy in host cells and facilitates production of virus progeny particles. Its function is as follows. Functions as a signal peptide for NS4B and is required for the interferon antagonism activity of the latter. Induces the formation of ER-derived membrane vesicles where the viral replication takes place. Inhibits interferon (IFN)-induced host STAT1 phosphorylation and nuclear translocation, thereby preventing the establishment of cellular antiviral state by blocking the IFN-alpha/beta pathway. Functionally, replicates the viral (+) and (-) RNA genome, and performs the capping of genomes in the cytoplasm. NS5 methylates viral RNA cap at guanine N-7 and ribose 2'-O positions. Besides its role in RNA genome replication, also prevents the establishment of cellular antiviral state by blocking the interferon-alpha/beta (IFN-alpha/beta) signaling pathway. Inhibits host TYK2 and STAT2 phosphorylation, thereby preventing activation of JAK-STAT signaling pathway. The polypeptide is Genome polyprotein (pol) (Dengue virus type 3 (strain Martinique/1243/1999) (DENV-3)).